The primary structure comprises 568 residues: Tetratricopeptide repeat protein 22 (568 aa).

TPR repeat units follow at residues 66–99 (PAVR…DPGN), 101–133 (NAWA…MGLE), 155–190 (YAHG…GQQI), 203–237 (ATLF…LGEV), 260–294 (KDTF…AKNQ), 296–328 (PILN…LTDP), and 432–465 (PELQ…DDEG).

The protein is Tetratricopeptide repeat protein 22 (Ttc22) of Mus musculus (Mouse).